The following is a 217-amino-acid chain: Thiamine-phosphate synthase (217 aa).

Residues 39–43 (QLRRK) and Asn-71 each bind 4-amino-2-methyl-5-(diphosphooxymethyl)pyrimidine. Asp-72 and Asp-91 together coordinate Mg(2+). Residue Ser-110 coordinates 4-amino-2-methyl-5-(diphosphooxymethyl)pyrimidine. Residue 137 to 139 (SPT) participates in 2-[(2R,5Z)-2-carboxy-4-methylthiazol-5(2H)-ylidene]ethyl phosphate binding. Lys-140 is a binding site for 4-amino-2-methyl-5-(diphosphooxymethyl)pyrimidine. 2-[(2R,5Z)-2-carboxy-4-methylthiazol-5(2H)-ylidene]ethyl phosphate-binding positions include Gly-173 and 193–194 (IS).

This sequence belongs to the thiamine-phosphate synthase family. The cofactor is Mg(2+).

It carries out the reaction 2-[(2R,5Z)-2-carboxy-4-methylthiazol-5(2H)-ylidene]ethyl phosphate + 4-amino-2-methyl-5-(diphosphooxymethyl)pyrimidine + 2 H(+) = thiamine phosphate + CO2 + diphosphate. The enzyme catalyses 2-(2-carboxy-4-methylthiazol-5-yl)ethyl phosphate + 4-amino-2-methyl-5-(diphosphooxymethyl)pyrimidine + 2 H(+) = thiamine phosphate + CO2 + diphosphate. It catalyses the reaction 4-methyl-5-(2-phosphooxyethyl)-thiazole + 4-amino-2-methyl-5-(diphosphooxymethyl)pyrimidine + H(+) = thiamine phosphate + diphosphate. It functions in the pathway cofactor biosynthesis; thiamine diphosphate biosynthesis; thiamine phosphate from 4-amino-2-methyl-5-diphosphomethylpyrimidine and 4-methyl-5-(2-phosphoethyl)-thiazole: step 1/1. In terms of biological role, condenses 4-methyl-5-(beta-hydroxyethyl)thiazole monophosphate (THZ-P) and 2-methyl-4-amino-5-hydroxymethyl pyrimidine pyrophosphate (HMP-PP) to form thiamine monophosphate (TMP). The sequence is that of Thiamine-phosphate synthase from Bordetella bronchiseptica (strain ATCC BAA-588 / NCTC 13252 / RB50) (Alcaligenes bronchisepticus).